The sequence spans 308 residues: Snake venom metalloprotease inhibitor 02D01 (308 aa).

A signal peptide spans 1-23 (MFVSRLAASGLLLLSLLALSLDG). A propeptide spanning residues 24-38 (KPLPQRQPHHIQPME) is cleaved from the precursor. At glutamine 39 the chain carries Pyrrolidone carboxylic acid. Positions 42 to 50 (LAPDAPPLE) are excised as a propeptide. At glutamine 51 the chain carries Pyrrolidone carboxylic acid. Positions 54–62 (LAPDAPPLE) are excised as a propeptide. A Pyrrolidone carboxylic acid modification is found at glutamine 63. Positions 66–74 (LAPAAPPLE) are excised as a propeptide. Residue glutamine 75 is modified to Pyrrolidone carboxylic acid. The propeptide occupies 78–86 (LAPDAPPME). Pyrrolidone carboxylic acid is present on glutamine 87. Positions 90-98 (LAPDAPPME) are excised as a propeptide. Glutamine 99 bears the Pyrrolidone carboxylic acid mark. The propeptide occupies 102–110 (LAPDAPPME). Glutamine 111 is modified (pyrrolidone carboxylic acid). Residues 114-122 (LAPDAPPME) constitute a propeptide that is removed on maturation. A Pyrrolidone carboxylic acid modification is found at glutamine 123. Residues 126–134 (LAPDAAPLE) constitute a propeptide that is removed on maturation. Glutamine 135 is modified (pyrrolidone carboxylic acid). Positions 138–146 (LAPDAPPME) are excised as a propeptide. Residue glutamine 147 is modified to Pyrrolidone carboxylic acid. Positions 150 to 158 (LAPDAPPME) are excised as a propeptide. Glutamine 159 is modified (pyrrolidone carboxylic acid). Residues 162–249 (QPQIPSLMEQ…KQASQKWGRL (88 aa)) constitute a propeptide that is removed on maturation. A compositionally biased stretch (polar residues) spans 172–182 (RQLSSGGTTAL). Disordered stretches follow at residues 172-228 (RQLS…AAAT) and 252-279 (HDHDHHHHHHPGSSVGGGGGGGGGGARR). Gly residues predominate over residues 198–209 (VVGGGGGGGGGS). Residues 210–227 (KAALALPKPPKAKGAAAA) are compositionally biased toward low complexity. The segment covering 265-277 (SVGGGGGGGGGGA) has biased composition (gly residues). Positions 278 to 286 (RRLKGLAKK) are excised as a propeptide. A disulfide bridge links cysteine 292 with cysteine 308.

In the C-terminal section; belongs to the natriuretic peptide family. The protein in the central section; belongs to the pHpG family. In terms of tissue distribution, expressed by the venom gland.

Its subcellular location is the secreted. Its function is as follows. pEKW and poly-His-poly-Gly peptides may serve as metalloproteinase inhibitors during glandular storage. Their inhibition may be instantly disengaged, by dilution or physiochemical change, when venom is injected into tissue of the prey. Functionally, has a vasorelaxant activity in rat aortic strips and a diuretic potency in anesthetized rats. May act by activating natriuretic receptors (NPR1 and/or NPR2). In Echis ocellatus (Ocellated saw-scaled viper), this protein is Snake venom metalloprotease inhibitor 02D01.